Consider the following 169-residue polypeptide: S-ribosylhomocysteine lyase (169 aa).

The Fe cation site is built by H54, H58, and C129.

Belongs to the LuxS family. In terms of assembly, homodimer. It depends on Fe cation as a cofactor.

The enzyme catalyses S-(5-deoxy-D-ribos-5-yl)-L-homocysteine = (S)-4,5-dihydroxypentane-2,3-dione + L-homocysteine. Its function is as follows. Involved in the synthesis of autoinducer 2 (AI-2) which is secreted by bacteria and is used to communicate both the cell density and the metabolic potential of the environment. The regulation of gene expression in response to changes in cell density is called quorum sensing. Catalyzes the transformation of S-ribosylhomocysteine (RHC) to homocysteine (HC) and 4,5-dihydroxy-2,3-pentadione (DPD). This chain is S-ribosylhomocysteine lyase, found in Haemophilus ducreyi (strain 35000HP / ATCC 700724).